We begin with the raw amino-acid sequence, 33 residues long: Photosystem II reaction center protein Psb30 (33 aa).

A helical transmembrane segment spans residues 5 to 25 (LIVQLGSLALITVAGPAIIVL).

Belongs to the Psb30/Ycf12 family. As to quaternary structure, PSII is composed of 1 copy each of membrane proteins PsbA, PsbB, PsbC, PsbD, PsbE, PsbF, PsbH, PsbI, PsbJ, PsbK, PsbL, PsbM, PsbT, PsbY, PsbZ, Psb30/Ycf12, peripheral proteins of the oxygen-evolving complex and a large number of cofactors. It forms dimeric complexes.

Its subcellular location is the plastid. It localises to the chloroplast thylakoid membrane. Functionally, a core subunit of photosystem II (PSII), probably helps stabilize the reaction center. In Euglena stellata, this protein is Photosystem II reaction center protein Psb30.